The chain runs to 207 residues: ATP-dependent Clp protease proteolytic subunit (207 aa).

The Nucleophile role is filled by Ser111. His136 is a catalytic residue.

It belongs to the peptidase S14 family. As to quaternary structure, fourteen ClpP subunits assemble into 2 heptameric rings which stack back to back to give a disk-like structure with a central cavity, resembling the structure of eukaryotic proteasomes.

It is found in the cytoplasm. The enzyme catalyses Hydrolysis of proteins to small peptides in the presence of ATP and magnesium. alpha-casein is the usual test substrate. In the absence of ATP, only oligopeptides shorter than five residues are hydrolyzed (such as succinyl-Leu-Tyr-|-NHMec, and Leu-Tyr-Leu-|-Tyr-Trp, in which cleavage of the -Tyr-|-Leu- and -Tyr-|-Trp bonds also occurs).. Cleaves peptides in various proteins in a process that requires ATP hydrolysis. Has a chymotrypsin-like activity. Plays a major role in the degradation of misfolded proteins. The chain is ATP-dependent Clp protease proteolytic subunit from Burkholderia mallei (strain ATCC 23344).